The primary structure comprises 763 residues: ATP-dependent RNA helicase SUV3 homolog, mitochondrial (763 aa).

A mitochondrion-targeting transit peptide spans 1-43 (MQNCRRCISLTGLLRMTLYLRPSFSIDLSLRRLHRAAFLFSRK). Residues 181–321 (NARAITRKIV…ALDLLQKICE (141 aa)) enclose the Helicase ATP-binding domain. Position 194–201 (194–201 (GPTNSGKT)) interacts with ATP. The Helicase C-terminal domain maps to 330-508 (RLYDRLTELT…PTADQIELYA (179 aa)). Positions 724–763 (AQQLGKSNSQSNENSEPVVNSDDEDNYSGIGRKTRKKRRK) are disordered. Over residues 727 to 741 (LGKSNSQSNENSEPV) the composition is skewed to polar residues.

This sequence belongs to the helicase family. It depends on Mg(2+) as a cofactor. Requires Mn(2+) as cofactor.

The protein resides in the mitochondrion. The enzyme catalyses ATP + H2O = ADP + phosphate + H(+). Functionally, major helicase player in mitochondrial RNA metabolism and maintenance. Likely component of the mitochondrial degradosome (mtEXO) complex, that degrades 3' overhang double-stranded RNA with a 3'-to-5' directionality in an ATP-dependent manner. ATPase and ATP-dependent multisubstrate helicase, able to unwind double-stranded (ds) DNA and RNA, and RNA/DNA heteroduplexes in the 5'-to-3' direction. Regulates mRNA stability and is required for the correct processing and maturation of mitochondrial transcripts. This is ATP-dependent RNA helicase SUV3 homolog, mitochondrial from Drosophila melanogaster (Fruit fly).